Reading from the N-terminus, the 212-residue chain is Orotate phosphoribosyltransferase (212 aa).

5-phospho-alpha-D-ribose 1-diphosphate is bound by residues arginine 97, lysine 101, histidine 103, and 123–131; that span reads EDLISTGGS. Serine 127 is a binding site for orotate.

The protein belongs to the purine/pyrimidine phosphoribosyltransferase family. PyrE subfamily. In terms of assembly, homodimer. Requires Mg(2+) as cofactor.

The catalysed reaction is orotidine 5'-phosphate + diphosphate = orotate + 5-phospho-alpha-D-ribose 1-diphosphate. It participates in pyrimidine metabolism; UMP biosynthesis via de novo pathway; UMP from orotate: step 1/2. In terms of biological role, catalyzes the transfer of a ribosyl phosphate group from 5-phosphoribose 1-diphosphate to orotate, leading to the formation of orotidine monophosphate (OMP). The protein is Orotate phosphoribosyltransferase of Phocaeicola vulgatus (strain ATCC 8482 / DSM 1447 / JCM 5826 / CCUG 4940 / NBRC 14291 / NCTC 11154) (Bacteroides vulgatus).